A 717-amino-acid chain; its full sequence is Polyribonucleotide nucleotidyltransferase (717 aa).

Residues Asp-486 and Asp-492 each coordinate Mg(2+). The 60-residue stretch at 553-612 (PKIVQLQIDIDKISLVIGSTGKTVKAITDEFEVRVQIEQDGRITLFGTDSLKMQKAKAKI) folds into the KH domain. The region spanning 622–715 (GEIYDGIVKK…KFGKIELELV (94 aa)) is the S1 motif domain. Positions 659-689 (RYGDMRHSRYGSGRHSRYGRDNRNTFGMNPP) are disordered. Basic residues predominate over residues 666–675 (SRYGSGRHSR).

It belongs to the polyribonucleotide nucleotidyltransferase family. Mg(2+) serves as cofactor.

It is found in the cytoplasm. It catalyses the reaction RNA(n+1) + phosphate = RNA(n) + a ribonucleoside 5'-diphosphate. Involved in mRNA degradation. Catalyzes the phosphorolysis of single-stranded polyribonucleotides processively in the 3'- to 5'-direction. The protein is Polyribonucleotide nucleotidyltransferase of Borrelia hermsii (strain HS1 / DAH).